Here is a 106-residue protein sequence, read N- to C-terminus: COX assembly mitochondrial protein homolog (106 aa).

Residue Ala2 is modified to N-acetylalanine. Positions 28–71 (RERCSEQVEDFTRCCKDSGILMVLKCRKENSALKDCLTAYYNDP) constitute a CHCH domain. Short sequence motifs (cx9C motif) lie at residues 31 to 41 (CSEQVEDFTRC) and 53 to 63 (CRKENSALKDC). 2 cysteine pairs are disulfide-bonded: Cys31–Cys63 and Cys41–Cys53.

Belongs to the CMC family. As to quaternary structure, component of the MITRAC (mitochondrial translation regulation assembly intermediate of cytochrome c oxidase complex) complex, the core components of this complex being COA3/MITRAC12 and COX14.

It is found in the mitochondrion. Functionally, component of the MITRAC (mitochondrial translation regulation assembly intermediate of cytochrome c oxidase complex) complex, that regulates cytochrome c oxidase assembly. The sequence is that of COX assembly mitochondrial protein homolog (Cmc1) from Mus musculus (Mouse).